The sequence spans 75 residues: Putative membrane protein insertion efficiency factor (75 aa).

It belongs to the UPF0161 family.

Its subcellular location is the cell membrane. In terms of biological role, could be involved in insertion of integral membrane proteins into the membrane. The chain is Putative membrane protein insertion efficiency factor from Halalkalibacterium halodurans (strain ATCC BAA-125 / DSM 18197 / FERM 7344 / JCM 9153 / C-125) (Bacillus halodurans).